The sequence spans 227 residues: 2,3-bisphosphoglycerate-dependent phosphoglycerate mutase (227 aa).

Residues 7 to 14, 20 to 21, Arg59, 86 to 89, Lys97, 113 to 114, and 182 to 183 each bind substrate; these read RHGFSEWN, TG, ERHY, RR, and GN. Catalysis depends on His8, which acts as the Tele-phosphohistidine intermediate. Glu86 functions as the Proton donor/acceptor in the catalytic mechanism.

The protein belongs to the phosphoglycerate mutase family. BPG-dependent PGAM subfamily. As to quaternary structure, homodimer.

It carries out the reaction (2R)-2-phosphoglycerate = (2R)-3-phosphoglycerate. It functions in the pathway carbohydrate degradation; glycolysis; pyruvate from D-glyceraldehyde 3-phosphate: step 3/5. In terms of biological role, catalyzes the interconversion of 2-phosphoglycerate and 3-phosphoglycerate. This Actinobacillus pleuropneumoniae serotype 5b (strain L20) protein is 2,3-bisphosphoglycerate-dependent phosphoglycerate mutase.